A 245-amino-acid chain; its full sequence is PF03932 family protein CutC (245 aa).

Belongs to the CutC family.

The protein resides in the cytoplasm. This chain is PF03932 family protein CutC, found in Photobacterium profundum (strain SS9).